We begin with the raw amino-acid sequence, 78 residues long: Small ribosomal subunit protein bS18 (78 aa).

The protein belongs to the bacterial ribosomal protein bS18 family. Part of the 30S ribosomal subunit. Forms a tight heterodimer with protein bS6.

In terms of biological role, binds as a heterodimer with protein bS6 to the central domain of the 16S rRNA, where it helps stabilize the platform of the 30S subunit. This Ligilactobacillus salivarius (strain UCC118) (Lactobacillus salivarius) protein is Small ribosomal subunit protein bS18.